The chain runs to 411 residues: Anaerobic sulfatase-maturating enzyme homolog AslB (411 aa).

The 248-residue stretch at 3 to 250 (QQVPTRAFHV…LVAIFDHWIK (248 aa)) folds into the Radical SAM core domain. Residues Cys-21 and Cys-25 each coordinate [4Fe-4S] cluster. Tyr-27 is an S-adenosyl-L-methionine binding site. Cys-28 lines the [4Fe-4S] cluster pocket. S-adenosyl-L-methionine-binding residues include Gly-74, Ser-129, and Arg-141. [4Fe-4S] cluster is bound by residues Cys-276, Cys-282, and Cys-297. Asp-298 acts as the Proton acceptor in catalysis. Residues Cys-339, Cys-342, Cys-348, Cys-352, and Cys-371 each coordinate [4Fe-4S] cluster.

Belongs to the radical SAM superfamily. Anaerobic sulfatase-maturating enzyme family. It depends on [4Fe-4S] cluster as a cofactor.

This Escherichia coli (strain K12) protein is Anaerobic sulfatase-maturating enzyme homolog AslB (aslB).